A 509-amino-acid polypeptide reads, in one-letter code: Citrinin biosynthesis transcriptional activator mrl3 (509 aa).

Residues 1-22 are disordered; the sequence is MASTAHRQPSRPTTRQRQRTGR. Positions 24-51 form a DNA-binding region, zn(2)-C6 fungal-type; it reads CEECRRRKLRCDGQQPRCGVCVDSGVTC. A disordered region spans residues 97 to 143; the sequence is STPLTNDHHDGCSVSSASSRSDSNPPPTVSEPDMSLPNTTTSVSSAP. The segment covering 109–119 has biased composition (low complexity); the sequence is SVSSASSRSDS. A compositionally biased stretch (polar residues) spans 132 to 143; it reads LPNTTTSVSSAP.

The protein resides in the nucleus. In terms of biological role, transcription factor that regulates the expression of the gene cluster that mediates the biosynthesis of the mycotoxin citrinin, a hepato-nephrotoxic compound to humans due to inhibition of respiration complex III. This is Citrinin biosynthesis transcriptional activator mrl3 from Monascus ruber (Mold).